The chain runs to 355 residues: Elongation factor Ts (355 aa).

Residues 82-85 are involved in Mg(2+) ion dislocation from EF-Tu; the sequence is TDFV.

It belongs to the EF-Ts family.

The protein resides in the cytoplasm. Functionally, associates with the EF-Tu.GDP complex and induces the exchange of GDP to GTP. It remains bound to the aminoacyl-tRNA.EF-Tu.GTP complex up to the GTP hydrolysis stage on the ribosome. This is Elongation factor Ts (tsf) from Helicobacter pylori (strain ATCC 700392 / 26695) (Campylobacter pylori).